The chain runs to 219 residues: Ribose-5-phosphate isomerase A (219 aa).

Substrate contacts are provided by residues 28 to 31, 81 to 84, and 94 to 97; these read TGST, DGAD, and KGGG. Catalysis depends on Glu-103, which acts as the Proton acceptor. Residue Lys-121 participates in substrate binding.

It belongs to the ribose 5-phosphate isomerase family. In terms of assembly, homodimer.

The catalysed reaction is aldehydo-D-ribose 5-phosphate = D-ribulose 5-phosphate. It functions in the pathway carbohydrate degradation; pentose phosphate pathway; D-ribose 5-phosphate from D-ribulose 5-phosphate (non-oxidative stage): step 1/1. Catalyzes the reversible conversion of ribose-5-phosphate to ribulose 5-phosphate. The protein is Ribose-5-phosphate isomerase A of Nitrosomonas europaea (strain ATCC 19718 / CIP 103999 / KCTC 2705 / NBRC 14298).